Consider the following 472-residue polypeptide: Trigger factor (472 aa).

Positions 172–257 constitute a PPIase FKBP-type domain; it reads GDEVRFDFKG…IKEITSVKPQ (86 aa). 2 stretches are compositionally biased toward polar residues: residues 439–449 and 461–472; these read NQPKDTASTLS and KTSNTKKVASKK. Positions 439-472 are disordered; it reads NQPKDTASTLSKQEDKPKVAKAKTSNTKKVASKK.

It belongs to the FKBP-type PPIase family. Tig subfamily.

It is found in the cytoplasm. The enzyme catalyses [protein]-peptidylproline (omega=180) = [protein]-peptidylproline (omega=0). Involved in protein export. Acts as a chaperone by maintaining the newly synthesized protein in an open conformation. Functions as a peptidyl-prolyl cis-trans isomerase. This Ureaplasma urealyticum serovar 10 (strain ATCC 33699 / Western) protein is Trigger factor.